A 432-amino-acid polypeptide reads, in one-letter code: Monooxygenase penA (432 aa).

A helical transmembrane segment spans residues 7 to 29; the sequence is FKIAIIGAGPAGLTLASLLTASP. N-linked (GlcNAc...) asparagine glycosylation is present at Asn-33.

Belongs to the aromatic-ring hydroxylase family. Requires FAD as cofactor.

The protein localises to the membrane. The protein operates within secondary metabolite biosynthesis. It participates in alkaloid biosynthesis. Its pathway is mycotoxin biosynthesis. Its function is as follows. Monooxygenase; part of the gene cluster that mediates the biosynthesis of penigequinolones, potent insecticidal alkaloids that contain a highly modified 10-carbon prenyl group. The first stage is catalyzed by the nonribosomal peptide synthetase penN that condenses anthranilic acid and O-methyl-L-tyrosine to produce 4'-methoxycyclopeptin. 4'-methoxycyclopeptin is then converted to 4'-methoxydehydrocyclopeptin by the ketoglutarate-dependent dioxygenase penM through dehydrogenation to form a double bond between C-alpha and C-beta of the O-methyltyrosine side chain. PenM also converts its first product methoxydehydrocyclopeptin to 4'-methoxycyclopenin. The following conversion of 4'methoxycyclopenin into 4'-methoxyviridicatin is catalyzed by the cyclopenase penL. 4'-methoxyviridicatin is the precursor of quinolone natural products, and is further converted to quinolinone B. The prenyltransferase penI then catalyzes the canonical Friedel-Crafts alkylation of quinolinone B with dimethylallyl cation to yield dimethylallyl quinolone, which is subjected to FAD-dependent dehydrogenation by the FAD-linked oxidoreductase penH to yield conjugated aryl diene. The delta(3') double bond then serves as the site of the second alkylation with DMAPP catalyzed by the prenyltransferase penG to yield a carbenium ion intermediate, which can be attacked by H(2)O to yield a styrenyl quinolone containing a C3'-hydroxyprenyl chain, or undergo cyclization to yield yaequinolones J1 and J2. The conversion of the styrenyl quinolone into the tetrahydrofuran-containing yaequinolone C is performed by the FAD-dependent monooxygenase penE and involves epoxidation of the terminal C7'-C8' olefin, followed by epoxide ring opening initiated by the C3' hydroxyl group. The predicted cysteine hydrolase penJ acts as an epoxide hydrolase that enhances the rate of the 5-exo-tet cyclization step, increasing the yield of yaequinolone C. PenF catalyzes the cationic rearrangement of the epoxide formed by penE (before ring opening to produce yaequinolone C) into yaequinolone D. Finally, the short-chain dehydrogenase/reductase (SDR)-like reductase penD, catalyzes both the dehydration of yaequinolone D and the reduction of the resulting oxonium to yield penigequinolone. In Penicillium thymicola, this protein is Monooxygenase penA.